A 117-amino-acid chain; its full sequence is Translation initiation factor 1A (117 aa).

An S1-like domain is found at 17-92 (IRVPLPDRSK…ERGDIVYRYT (76 aa)).

The protein belongs to the eIF-1A family.

Functionally, seems to be required for maximal rate of protein biosynthesis. Enhances ribosome dissociation into subunits and stabilizes the binding of the initiator Met-tRNA(I) to 40 S ribosomal subunits. In Thermococcus kodakarensis (strain ATCC BAA-918 / JCM 12380 / KOD1) (Pyrococcus kodakaraensis (strain KOD1)), this protein is Translation initiation factor 1A.